Here is a 438-residue protein sequence, read N- to C-terminus: sn-glycerol-3-phosphate-binding periplasmic protein UgpB (438 aa).

A signal peptide spans 1 to 23 (MKPLHYTASALALGLALMGNAQA). Positions 65, 89, 144, 270, 307, 346, and 397 each coordinate sn-glycerol 3-phosphate.

It belongs to the bacterial solute-binding protein 1 family. As to quaternary structure, the complex is composed of two ATP-binding proteins (UgpC), two transmembrane proteins (UgpA and UgpE) and a solute-binding protein (UgpB).

Its subcellular location is the periplasm. In terms of biological role, part of the ABC transporter complex UgpBAEC involved in sn-glycerol-3-phosphate (G3P) import. Binds G3P. The chain is sn-glycerol-3-phosphate-binding periplasmic protein UgpB (ugpB) from Shigella flexneri serotype 5b (strain 8401).